Consider the following 236-residue polypeptide: uncharacterized protein (236 aa).

Over residues 1 to 12 the composition is skewed to basic residues; that stretch reads MKLLGHRKSHGH. Residues 1 to 108 form a disordered region; that stretch reads MKLLGHRKSH…KAANRARMTE (108 aa). Over residues 13-31 the composition is skewed to basic and acidic residues; that stretch reads QRADASPDAGSKDGCRPDS. The segment covering 32 to 47 has biased composition (low complexity); it reads GRTSGSDTSRGSQTTG. A compositionally biased stretch (basic residues) spans 52–65; sequence PTPKRNQSRRHTKK. Residues 67–78 show a composition bias toward low complexity; it reads PVAPAPMTAAQA. Over residues 90–108 the composition is skewed to basic and acidic residues; sequence LSREERRAEKAANRARMTE. 2 helical membrane-spanning segments follow: residues 142-162 and 166-186; these read NLLGLFMPSALTLLFVMFAVP and FYLSPAMLILLALMTIDAIIL.

Its subcellular location is the cell membrane. This is an uncharacterized protein from Mycobacterium tuberculosis (strain CDC 1551 / Oshkosh).